The following is a 37-amino-acid chain: Cytochrome b6-f complex subunit 5 (37 aa).

Residues Leu5–Ala25 traverse the membrane as a helical segment.

Belongs to the PetG family. The 4 large subunits of the cytochrome b6-f complex are cytochrome b6, subunit IV (17 kDa polypeptide, PetD), cytochrome f and the Rieske protein, while the 4 small subunits are PetG, PetL, PetM and PetN. The complex functions as a dimer.

It is found in the plastid. The protein resides in the chloroplast thylakoid membrane. Component of the cytochrome b6-f complex, which mediates electron transfer between photosystem II (PSII) and photosystem I (PSI), cyclic electron flow around PSI, and state transitions. PetG is required for either the stability or assembly of the cytochrome b6-f complex. The protein is Cytochrome b6-f complex subunit 5 of Tupiella akineta (Green alga).